The sequence spans 431 residues: MAKIINVIGREIMDSRGNPTVEAEVHLEGGFVGMAAAPSGASTGSREALELRDGDKSRYLGKGVLTAVANVNDLIRTALLGKDATAQAELDQIMIDLDGTENKDKLGANAILAVSLAAAKAAAAFKGIPLYAHIAELNGTPGQYSMPVPMMNILNGGEHADNNVDIQEFMVQPVGAKTFREALRMGAEIFHTLKKVLHDKGLSTSVGDEGGFAPNLASNADALAIIKEAVELAGYKLGTDVTLALDCAASEFYKDGKYDLAGEGKVFDSNGFSDFLKSLADQYPIVSIEDGLDESDWDGWAYQTQIMGDKIQLVGDDLFVTNTKILTRGIENGIANSILIKFNQIGSLTETLAAIRMAKEAGYTAVISHRSGETEDSTIADLAVGTAAGQIKTGSLCRSDRVAKYNQLLRIEEQLGEKAPYRGLKEIKGQA.

Residue Q167 participates in (2R)-2-phosphoglycerate binding. The active-site Proton donor is E209. Residues D246, E289, and D316 each contribute to the Mg(2+) site. (2R)-2-phosphoglycerate is bound by residues K341, R370, S371, and K392. Residue K341 is the Proton acceptor of the active site.

It belongs to the enolase family. In terms of assembly, component of the RNA degradosome, a multiprotein complex involved in RNA processing and mRNA degradation. Requires Mg(2+) as cofactor.

The protein localises to the cytoplasm. It is found in the secreted. Its subcellular location is the cell surface. The catalysed reaction is (2R)-2-phosphoglycerate = phosphoenolpyruvate + H2O. Its pathway is carbohydrate degradation; glycolysis; pyruvate from D-glyceraldehyde 3-phosphate: step 4/5. Catalyzes the reversible conversion of 2-phosphoglycerate (2-PG) into phosphoenolpyruvate (PEP). It is essential for the degradation of carbohydrates via glycolysis. The protein is Enolase of Shewanella baltica (strain OS155 / ATCC BAA-1091).